The following is a 280-amino-acid chain: Meiotic driver wtf35 (280 aa).

Residues methionine 1–proline 29 show a composition bias toward basic and acidic residues. Disordered regions lie at residues methionine 1–asparagine 49 and asparagine 64–aspartate 100. Helical transmembrane passes span phenylalanine 105–cysteine 125, tryptophan 142–phenylalanine 162, isoleucine 184–alanine 204, and serine 218–valine 238.

The protein belongs to the WTF family. Homomer. Forms protein aggregates. The two isoforms can interact with each other and with themselves. High sequence similarity is required for their interaction.

It localises to the spore membrane. The protein localises to the vacuole membrane. The protein resides in the ascus epiplasm. It is found in the cytoplasm. Its subcellular location is the endoplasmic reticulum membrane. Its function is as follows. Promotes unequal transmission of alleles from the parental zygote to progeny spores by acting as poison/antidote system where the poison and antidote proteins are produced from the same locus; the poison component is trans-acting and targets all spores within an ascus whereas the antidote component is spore-specific, leading to poisoning of all progeny that do not inherit the allele. Localizes isoform 2 to the vacuole thereby facilitating its degradation. Functionally, forms toxic aggregates that disrupt spore maturation. The polypeptide is Meiotic driver wtf35 (Schizosaccharomyces pombe (Fission yeast)).